The following is a 325-amino-acid chain: MIARIWSGESPLWRLLLPLSWLYGLVSGAIRLSYKLGFKRAWRAPVPVVVVGNLTAGGNGKTPVVIWLVEKLQQRGVRVGVVSRGYGGKAAAYPLLLTPETTTAEAGDEPVLIYQRTGAPVAVAPERAAAVKAILAAHNLQIIITDDGLQHYRLARDIEIVVIDGVRRFGNGWWLPAGPMRERASRLKTVDAAIVNGGVARAGEIPMQLAPGLAVNLRTGARCDVAQLSNIVAMAGIGHPPRFFATLEACGAHPQKCVPLADHQTLAPADVQALVGEGQTLVMTEKDAVKCRAFAEDNWWFLPVDARLSGEQPDKLLEHITSLVR.

Thr55–Thr62 contacts ATP.

Belongs to the LpxK family.

It carries out the reaction a lipid A disaccharide + ATP = a lipid IVA + ADP + H(+). It participates in glycolipid biosynthesis; lipid IV(A) biosynthesis; lipid IV(A) from (3R)-3-hydroxytetradecanoyl-[acyl-carrier-protein] and UDP-N-acetyl-alpha-D-glucosamine: step 6/6. Transfers the gamma-phosphate of ATP to the 4'-position of a tetraacyldisaccharide 1-phosphate intermediate (termed DS-1-P) to form tetraacyldisaccharide 1,4'-bis-phosphate (lipid IVA). This is Tetraacyldisaccharide 4'-kinase from Salmonella enteritidis PT4 (strain P125109).